Consider the following 297-residue polypeptide: Probable transcription factor vicR (297 aa).

2 disordered regions span residues L45–T80 and T100–H134. A compositionally biased stretch (basic and acidic residues) spans Q58–A67. The segment covering A69–T80 has biased composition (polar residues). Residues R110–S124 show a composition bias toward basic and acidic residues.

It is found in the nucleus. Functionally, probable transcription factor; part of the gene cluster that mediates the biosynthesis of the secondary metabolite victorin, the molecular basis for Victoria blight of oats. May play a role in the regulation of the production of victorin. The protein is Probable transcription factor vicR of Bipolaris victoriae (strain FI3) (Victoria blight of oats agent).